The chain runs to 281 residues: Tryptophan synthase alpha chain (281 aa).

Catalysis depends on proton acceptor residues Glu49 and Asp60.

It belongs to the TrpA family. In terms of assembly, tetramer of two alpha and two beta chains.

The enzyme catalyses (1S,2R)-1-C-(indol-3-yl)glycerol 3-phosphate + L-serine = D-glyceraldehyde 3-phosphate + L-tryptophan + H2O. It participates in amino-acid biosynthesis; L-tryptophan biosynthesis; L-tryptophan from chorismate: step 5/5. The alpha subunit is responsible for the aldol cleavage of indoleglycerol phosphate to indole and glyceraldehyde 3-phosphate. This chain is Tryptophan synthase alpha chain, found in Methanocaldococcus jannaschii (strain ATCC 43067 / DSM 2661 / JAL-1 / JCM 10045 / NBRC 100440) (Methanococcus jannaschii).